A 614-amino-acid polypeptide reads, in one-letter code: Sulfite reductase [NADPH] flavoprotein alpha-component (614 aa).

Residues 79-217 form the Flavodoxin-like domain; it reads LTIIFASQTG…AATEWRKQVL (139 aa). Residues 85-90, 132-135, and 168-177 each bind FMN; these read SQTGNA, STNG, and LGDSSYQFFC. The 215-residue stretch at 249–463 folds into the FAD-binding FR-type domain; it reads EQPYTASLST…VEHNNNFKLP (215 aa). Residues threonine 337, threonine 371, 401–404, 419–421, tyrosine 425, and 434–437 each bind FAD; these read RLYS, TVG, and GGAS. NADP(+) contacts are provided by residues 534–535, 540–544, and aspartate 576; these read SR and KVYVQ. Residue tyrosine 614 participates in FAD binding.

It belongs to the NADPH-dependent sulphite reductase flavoprotein subunit CysJ family. The protein in the N-terminal section; belongs to the flavodoxin family. In the C-terminal section; belongs to the flavoprotein pyridine nucleotide cytochrome reductase family. In terms of assembly, alpha(8)-beta(8). The alpha component is a flavoprotein, the beta component is a hemoprotein. The cofactor is FAD. FMN is required as a cofactor.

It catalyses the reaction hydrogen sulfide + 3 NADP(+) + 3 H2O = sulfite + 3 NADPH + 4 H(+). Its pathway is sulfur metabolism; hydrogen sulfide biosynthesis; hydrogen sulfide from sulfite (NADPH route): step 1/1. Functionally, component of the sulfite reductase complex that catalyzes the 6-electron reduction of sulfite to sulfide. This is one of several activities required for the biosynthesis of L-cysteine from sulfate. The flavoprotein component catalyzes the electron flow from NADPH -&gt; FAD -&gt; FMN to the hemoprotein component. This chain is Sulfite reductase [NADPH] flavoprotein alpha-component, found in Vibrio cholerae serotype O1 (strain ATCC 39315 / El Tor Inaba N16961).